The following is an 85-amino-acid chain: DNA-directed RNA polymerase subunit omega (85 aa).

This sequence belongs to the RNA polymerase subunit omega family. The RNAP catalytic core consists of 2 alpha, 1 beta, 1 beta' and 1 omega subunit. When a sigma factor is associated with the core the holoenzyme is formed, which can initiate transcription.

It carries out the reaction RNA(n) + a ribonucleoside 5'-triphosphate = RNA(n+1) + diphosphate. Its function is as follows. Promotes RNA polymerase assembly. Latches the N- and C-terminal regions of the beta' subunit thereby facilitating its interaction with the beta and alpha subunits. This Tropheryma whipplei (strain TW08/27) (Whipple's bacillus) protein is DNA-directed RNA polymerase subunit omega.